The primary structure comprises 294 residues: 4-hydroxy-tetrahydrodipicolinate synthase (294 aa).

Residue threonine 47 participates in pyruvate binding. Tyrosine 135 serves as the catalytic Proton donor/acceptor. Lysine 163 functions as the Schiff-base intermediate with substrate in the catalytic mechanism. Threonine 205 is a binding site for pyruvate.

The protein belongs to the DapA family. Homotetramer; dimer of dimers.

The protein resides in the cytoplasm. The enzyme catalyses L-aspartate 4-semialdehyde + pyruvate = (2S,4S)-4-hydroxy-2,3,4,5-tetrahydrodipicolinate + H2O + H(+). It functions in the pathway amino-acid biosynthesis; L-lysine biosynthesis via DAP pathway; (S)-tetrahydrodipicolinate from L-aspartate: step 3/4. In terms of biological role, catalyzes the condensation of (S)-aspartate-beta-semialdehyde [(S)-ASA] and pyruvate to 4-hydroxy-tetrahydrodipicolinate (HTPA). In Rickettsia conorii (strain ATCC VR-613 / Malish 7), this protein is 4-hydroxy-tetrahydrodipicolinate synthase.